The sequence spans 286 residues: Beta-lactamase Ohio-1 (286 aa).

The signal sequence occupies residues 1–21; the sequence is MRYFRLCIISLLATLPLRVHA. The Acyl-ester intermediate role is filled by Ser-66. Cys-73 and Cys-119 are oxidised to a cystine. Residue Glu-164 is the Proton acceptor of the active site. 230 to 232 is a substrate binding site; sequence KTG.

It belongs to the class-A beta-lactamase family.

It catalyses the reaction a beta-lactam + H2O = a substituted beta-amino acid. This is Beta-lactamase Ohio-1 from Enterobacter cloacae.